The sequence spans 299 residues: ATP phosphoribosyltransferase (299 aa).

Belongs to the ATP phosphoribosyltransferase family. Long subfamily. As to quaternary structure, equilibrium between an active dimeric form, an inactive hexameric form and higher aggregates. Interconversion between the various forms is largely reversible and is influenced by the natural substrates and inhibitors of the enzyme. Mg(2+) serves as cofactor.

The protein resides in the cytoplasm. It carries out the reaction 1-(5-phospho-beta-D-ribosyl)-ATP + diphosphate = 5-phospho-alpha-D-ribose 1-diphosphate + ATP. Its pathway is amino-acid biosynthesis; L-histidine biosynthesis; L-histidine from 5-phospho-alpha-D-ribose 1-diphosphate: step 1/9. Feedback inhibited by histidine. Catalyzes the condensation of ATP and 5-phosphoribose 1-diphosphate to form N'-(5'-phosphoribosyl)-ATP (PR-ATP). Has a crucial role in the pathway because the rate of histidine biosynthesis seems to be controlled primarily by regulation of HisG enzymatic activity. The sequence is that of ATP phosphoribosyltransferase from Erwinia tasmaniensis (strain DSM 17950 / CFBP 7177 / CIP 109463 / NCPPB 4357 / Et1/99).